The primary structure comprises 220 residues: Putative pyrophosphatase PpaX (220 aa).

Asp9 serves as the catalytic Nucleophile.

It belongs to the HAD-like hydrolase superfamily. PpaX family. Mg(2+) serves as cofactor.

It carries out the reaction diphosphate + H2O = 2 phosphate + H(+). The chain is Putative pyrophosphatase PpaX from Caldanaerobacter subterraneus subsp. tengcongensis (strain DSM 15242 / JCM 11007 / NBRC 100824 / MB4) (Thermoanaerobacter tengcongensis).